Consider the following 364-residue polypeptide: Protein FAM81A (364 aa).

3 coiled-coil regions span residues 75–107, 158–189, and 261–287; these read FLEE…RDNI, NKEQ…VDLS, and ANER…QKRN. The disordered stretch occupies residues 281-300; it reads EESQKRNAEGQRKPDEEKVH.

It belongs to the FAM81 family. In terms of assembly, interacts with DLG4/PSD-95, GRIN2B/GLUN2B and SYNGAP1; the interactions facilitate condensate formation. Expressed in most regions of the brain (at protein level).

It is found in the postsynaptic density. The protein resides in the cytoplasm. Its function is as follows. Facilitates the interaction and assembly of proteins within the postsynaptic density by promoting the condensation of postsynaptic proteins via liquid-liquid phase separation. Required for neuronal activity. Accumulation at the postsynaptic density results in enlargement of dendritic spines. This chain is Protein FAM81A (Fam81a), found in Mus musculus (Mouse).